The primary structure comprises 293 residues: tRNA (guanine-N(7)-)-methyltransferase (293 aa).

Residues 1–31 (MGGDKIKKDKRQKREDYRAAMRKDDISELPR) are compositionally biased toward basic and acidic residues. Disordered regions lie at residues 1–33 (MGGD…PRKK) and 68–97 (IVDE…TPLR). The span at 75-85 (TSPPPPPPVPE) shows a compositional bias: pro residues. S-adenosyl-L-methionine contacts are provided by residues Gly111, 134 to 135 (EI), 169 to 170 (NT), and Cys189. Asp192 is an active-site residue. 267–269 (TEE) provides a ligand contact to S-adenosyl-L-methionine.

It belongs to the class I-like SAM-binding methyltransferase superfamily. TrmB family. Forms a complex with TRM82.

It localises to the nucleus. The catalysed reaction is guanosine(46) in tRNA + S-adenosyl-L-methionine = N(7)-methylguanosine(46) in tRNA + S-adenosyl-L-homocysteine. The protein operates within tRNA modification; N(7)-methylguanine-tRNA biosynthesis. Its function is as follows. Catalyzes the formation of N(7)-methylguanine at position 46 (m7G46) in tRNA. The protein is tRNA (guanine-N(7)-)-methyltransferase of Chaetomium globosum (strain ATCC 6205 / CBS 148.51 / DSM 1962 / NBRC 6347 / NRRL 1970) (Soil fungus).